The sequence spans 173 residues: ATP-dependent protease subunit HslV (173 aa).

The active site involves Thr-2. Na(+) is bound by residues Gly-158, Asp-161, and Ser-164.

It belongs to the peptidase T1B family. HslV subfamily. A double ring-shaped homohexamer of HslV is capped on each side by a ring-shaped HslU homohexamer. The assembly of the HslU/HslV complex is dependent on binding of ATP.

Its subcellular location is the cytoplasm. It catalyses the reaction ATP-dependent cleavage of peptide bonds with broad specificity.. With respect to regulation, allosterically activated by HslU binding. Functionally, protease subunit of a proteasome-like degradation complex believed to be a general protein degrading machinery. This chain is ATP-dependent protease subunit HslV, found in Mannheimia haemolytica (Pasteurella haemolytica).